The following is a 298-amino-acid chain: MLKIGSHVSMSGKKMLLAASEEAVSYGATTFMIYTGAPQNTRRKPIEELNIEAGRKHMEEHGIKEIIVHAPYIINIGNTTKPETFQLGVDFLRMEIERTEALGVAKQIVLHPGAHVGAGADAGIAQIIKGLNEVLTPEQTVNIALETMAGKGTECGRSFEEIARIIDGVTYNEKLSVCFDTCHTHDAGYDIANDFDGVLNEFDKIVGIDRLQVLHVNDSKNVRGAAKDRHENIGFGHIGYKALHDIVHHPQLEHIPKILETPYVGEEKKDKKPPYKFEIEMLKNGTFDEGLLEKIKGQ.

Residues histidine 69, histidine 111, glutamate 146, aspartate 180, histidine 183, histidine 215, aspartate 228, histidine 230, and glutamate 260 each coordinate Zn(2+).

This sequence belongs to the AP endonuclease 2 family. Zn(2+) is required as a cofactor.

The enzyme catalyses Endonucleolytic cleavage to 5'-phosphooligonucleotide end-products.. Endonuclease IV plays a role in DNA repair. It cleaves phosphodiester bonds at apurinic or apyrimidinic (AP) sites, generating a 3'-hydroxyl group and a 5'-terminal sugar phosphate. The sequence is that of Probable endonuclease 4 from Bacillus cytotoxicus (strain DSM 22905 / CIP 110041 / 391-98 / NVH 391-98).